Consider the following 368-residue polypeptide: Phosphoserine aminotransferase (368 aa).

Position 42 (Arg-42) interacts with L-glutamate. Pyridoxal 5'-phosphate-binding positions include 76 to 77 (AS), Trp-102, Thr-152, Asp-179, and Gln-202. Residue Lys-203 is modified to N6-(pyridoxal phosphate)lysine. 245–246 (NT) lines the pyridoxal 5'-phosphate pocket.

It belongs to the class-V pyridoxal-phosphate-dependent aminotransferase family. SerC subfamily. As to quaternary structure, homodimer. Requires pyridoxal 5'-phosphate as cofactor.

It localises to the cytoplasm. It catalyses the reaction O-phospho-L-serine + 2-oxoglutarate = 3-phosphooxypyruvate + L-glutamate. The catalysed reaction is 4-(phosphooxy)-L-threonine + 2-oxoglutarate = (R)-3-hydroxy-2-oxo-4-phosphooxybutanoate + L-glutamate. It functions in the pathway amino-acid biosynthesis; L-serine biosynthesis; L-serine from 3-phospho-D-glycerate: step 2/3. The protein operates within cofactor biosynthesis; pyridoxine 5'-phosphate biosynthesis; pyridoxine 5'-phosphate from D-erythrose 4-phosphate: step 3/5. In terms of biological role, catalyzes the reversible conversion of 3-phosphohydroxypyruvate to phosphoserine and of 3-hydroxy-2-oxo-4-phosphonooxybutanoate to phosphohydroxythreonine. The polypeptide is Phosphoserine aminotransferase (Nitrosomonas europaea (strain ATCC 19718 / CIP 103999 / KCTC 2705 / NBRC 14298)).